We begin with the raw amino-acid sequence, 78 residues long: MKLTCMMIVAVLFLTAWTFATADDSGNGLENLFSNAHHQMKNPEASKLNKRWCKQSGEMCNLLDQNCCDGYCIVFVCT.

A signal peptide spans 1 to 22 (MKLTCMMIVAVLFLTAWTFATA). Positions 23–49 (DDSGNGLENLFSNAHHQMKNPEASKLN) are excised as a propeptide. 3 disulfide bridges follow: cysteine 53–cysteine 68, cysteine 60–cysteine 72, and cysteine 67–cysteine 77.

The protein belongs to the conotoxin O1 superfamily. As to expression, expressed by the venom duct.

The protein resides in the secreted. Its function is as follows. Delta-conotoxins bind to site 6 of voltage-gated sodium channels (Nav) and inhibit the inactivation process. The polypeptide is Delta-conotoxin-like TxMKLT1-0111 (Conus textile (Cloth-of-gold cone)).